The following is a 193-amino-acid chain: tRNA (cytidine(56)-2'-O)-methyltransferase (193 aa).

S-adenosyl-L-methionine-binding positions include leucine 86 and 115-119; that span reads GGEKV.

This sequence belongs to the aTrm56 family. As to quaternary structure, homodimer.

The protein resides in the cytoplasm. The catalysed reaction is cytidine(56) in tRNA + S-adenosyl-L-methionine = 2'-O-methylcytidine(56) in tRNA + S-adenosyl-L-homocysteine + H(+). In terms of biological role, specifically catalyzes the AdoMet-dependent 2'-O-ribose methylation of cytidine at position 56 in tRNAs. This is tRNA (cytidine(56)-2'-O)-methyltransferase from Haloquadratum walsbyi (strain DSM 16790 / HBSQ001).